The following is a 96-amino-acid chain: UPF0235 protein MK0273 (96 aa).

Belongs to the UPF0235 family.

This Methanopyrus kandleri (strain AV19 / DSM 6324 / JCM 9639 / NBRC 100938) protein is UPF0235 protein MK0273.